Here is a 114-residue protein sequence, read N- to C-terminus: Large ribosomal subunit protein uL22c (114 aa).

Belongs to the universal ribosomal protein uL22 family. As to quaternary structure, part of the 50S ribosomal subunit.

The protein resides in the plastid. It localises to the chloroplast. In terms of biological role, this protein binds specifically to 23S rRNA. Functionally, the globular domain of the protein is located near the polypeptide exit tunnel on the outside of the subunit, while an extended beta-hairpin is found that lines the wall of the exit tunnel in the center of the 70S ribosome. The chain is Large ribosomal subunit protein uL22c (rpl22) from Gracilaria tenuistipitata var. liui (Red alga).